A 696-amino-acid polypeptide reads, in one-letter code: Elongation factor G (696 aa).

A tr-type G domain is found at 8 to 282; that stretch reads DRTRNIGIMA…AVIDYLPSPL (275 aa). GTP is bound by residues 17 to 24, 81 to 85, and 135 to 138; these read AHIDAGKT, DTPGH, and NKMD.

The protein belongs to the TRAFAC class translation factor GTPase superfamily. Classic translation factor GTPase family. EF-G/EF-2 subfamily.

The protein resides in the cytoplasm. In terms of biological role, catalyzes the GTP-dependent ribosomal translocation step during translation elongation. During this step, the ribosome changes from the pre-translocational (PRE) to the post-translocational (POST) state as the newly formed A-site-bound peptidyl-tRNA and P-site-bound deacylated tRNA move to the P and E sites, respectively. Catalyzes the coordinated movement of the two tRNA molecules, the mRNA and conformational changes in the ribosome. This chain is Elongation factor G, found in Staphylococcus saprophyticus subsp. saprophyticus (strain ATCC 15305 / DSM 20229 / NCIMB 8711 / NCTC 7292 / S-41).